Here is a 295-residue protein sequence, read N- to C-terminus: Glutamyl-Q tRNA(Asp) synthetase (295 aa).

L-glutamate-binding positions include 5-9 (RFAPS) and glutamate 41. The short motif at 8–18 (PSPTGLLHIGS) is the 'HIGH' region element. Cysteine 97, cysteine 99, tyrosine 117, and cysteine 121 together coordinate Zn(2+). L-glutamate is bound by residues tyrosine 178 and arginine 196. The 'KMSKS' region motif lies at 234-238 (KWSKQ). Residue lysine 237 coordinates ATP.

The protein belongs to the class-I aminoacyl-tRNA synthetase family. GluQ subfamily. The cofactor is Zn(2+).

Its function is as follows. Catalyzes the tRNA-independent activation of glutamate in presence of ATP and the subsequent transfer of glutamate onto a tRNA(Asp). Glutamate is transferred on the 2-amino-5-(4,5-dihydroxy-2-cyclopenten-1-yl) moiety of the queuosine in the wobble position of the QUC anticodon. The sequence is that of Glutamyl-Q tRNA(Asp) synthetase from Neisseria gonorrhoeae (strain ATCC 700825 / FA 1090).